The chain runs to 208 residues: MAGNETIETFLDGLASSAPTPGGGGAAAISGAMGAALVSMVCNLTIGKKKYVEVEADLKQVLEKSEGLRRTLTGMIADDVEAFDAVMGAYGLPKNTDEEKAARAAKIQEALKTATDVPLACCRVCREVIDLAEIVAEKGNLNVISDAGVAVLSAYAGLRSAALNVYVNAKGLDDRAFAEERLKELEGLLAEAGALNERIYETVKSKVN.

A helical membrane pass occupies residues 25–46; the sequence is GAAAISGAMGAALVSMVCNLTI.

Belongs to the cyclodeaminase/cyclohydrolase family. Homodimer.

It is found in the membrane. It catalyses the reaction (6R)-5,10-methenyltetrahydrofolate + H2O = (6R)-10-formyltetrahydrofolate + H(+). The protein operates within one-carbon metabolism; formaldehyde assimilation via serine pathway. Required for both C1 and C2 metabolism. The sequence is that of Methenyltetrahydrofolate cyclohydrolase (fchA) from Methylorubrum extorquens (strain ATCC 14718 / DSM 1338 / JCM 2805 / NCIMB 9133 / AM1) (Methylobacterium extorquens).